Here is a 1175-residue protein sequence, read N- to C-terminus: Tyrosine-protein phosphatase non-receptor type 21 (1175 aa).

The 286-residue stretch at 23–308 (LVARIQLLNN…ARHKFYRLNQ (286 aa)) folds into the FERM domain. Positions 395-421 (YSAHSTNSLNTPQPYLQPSPMSSNPSI) are enriched in polar residues. The interval 395 to 445 (YSAHSTNSLNTPQPYLQPSPMSSNPSIPGSDVMRPDYIPSHRHSALIPPSY) is disordered. Phosphoserine occurs at positions 577, 589, 590, 637, 673, 710, 711, 798, 800, and 805. Residues 663 to 702 (DVAPRTFSAGSQSSVFSDKVKQEGTEEQGSGGYSHKKSLS) form a disordered region. A Tyrosine-protein phosphatase domain is found at 897-1168 (VFTEYERILK…TFVYRVLIQF (272 aa)). Substrate contacts are provided by residues glutamate 1068, 1109–1115 (CSAGVGR), and glutamine 1153. Cysteine 1109 functions as the Phosphocysteine intermediate in the catalytic mechanism.

Belongs to the protein-tyrosine phosphatase family. Non-receptor class subfamily. Particularly abundantly in adrenal glands.

Its subcellular location is the cytoplasm. The protein localises to the cytoskeleton. It catalyses the reaction O-phospho-L-tyrosyl-[protein] + H2O = L-tyrosyl-[protein] + phosphate. The polypeptide is Tyrosine-protein phosphatase non-receptor type 21 (Ptpn21) (Rattus norvegicus (Rat)).